Here is a 413-residue protein sequence, read N- to C-terminus: Scarecrow-like protein 21 (413 aa).

The 373-residue stretch at 41 to 413 folds into the GRAS domain; that stretch reads IVEAISRGDL…RILVSSCAWK (373 aa). The leucine repeat I (LRI) stretch occupies residues 48–108; sequence GDLKLVLVAC…VARLAASGSS (61 aa). The interval 127 to 192 is VHIID; it reads VYVLHEVCPY…GGAPNIRITG (66 aa). Residues 158–162 carry the VHIID motif; it reads IHIID. The segment at 201–233 is leucine repeat II (LRII); it reads TVKKRLEKLAKKFDVPFRFNAVSRPSCEVEVEN. A PFYRE region spans residues 242-336; sequence LGVNFAYMLH…QHCMARDVVN (95 aa). The interval 339–413 is SAW; the sequence is ACEGAERIER…RILVSSCAWK (75 aa).

This sequence belongs to the GRAS family. In terms of assembly, interacts with Meloidogyne incognita 16D10. Expressed in seedlings, roots, cotyledons, leaves and flowers.

It is found in the nucleus. Probable transcription factor involved in plant development. This Arabidopsis thaliana (Mouse-ear cress) protein is Scarecrow-like protein 21 (SCL21).